A 309-amino-acid polypeptide reads, in one-letter code: S-methyl-5'-thioadenosine phosphorylase (309 aa).

Residues T19, 64-65, and 97-98 contribute to the phosphate site; these read RH and SA. Residue M201 participates in substrate binding. Residue S202 participates in phosphate binding. 225 to 227 contacts substrate; sequence DYD.

It belongs to the PNP/MTAP phosphorylase family. MTAP subfamily. Homotrimer.

It is found in the cytoplasm. It localises to the nucleus. The enzyme catalyses S-methyl-5'-thioadenosine + phosphate = 5-(methylsulfanyl)-alpha-D-ribose 1-phosphate + adenine. The protein operates within amino-acid biosynthesis; L-methionine biosynthesis via salvage pathway; S-methyl-5-thio-alpha-D-ribose 1-phosphate from S-methyl-5'-thioadenosine (phosphorylase route): step 1/1. In terms of biological role, catalyzes the reversible phosphorylation of S-methyl-5'-thioadenosine (MTA) to adenine and 5-methylthioribose-1-phosphate. Involved in the breakdown of MTA, a major by-product of polyamine biosynthesis. Responsible for the first step in the methionine salvage pathway after MTA has been generated from S-adenosylmethionine. Has broad substrate specificity with 6-aminopurine nucleosides as preferred substrates. This is S-methyl-5'-thioadenosine phosphorylase from Tuber melanosporum (strain Mel28) (Perigord black truffle).